A 146-amino-acid chain; its full sequence is Hemoglobin subunit beta (146 aa).

In terms of domain architecture, Globin spans 2-146 (HWSAEEKQLI…VAHALARKYH (145 aa)). The heme b site is built by histidine 63 and histidine 92.

Belongs to the globin family. As to quaternary structure, heterotetramer of two alpha chains and two beta chains. In terms of tissue distribution, red blood cells.

In terms of biological role, involved in oxygen transport from the lung to the various peripheral tissues. This is Hemoglobin subunit beta (HBB) from Eudyptes chrysocome (Western rockhopper penguin).